Here is a 334-residue protein sequence, read N- to C-terminus: Glyceraldehyde-3-phosphate dehydrogenase B (334 aa).

NAD(+) is bound by residues 12 to 13 (RI), aspartate 34, and serine 121. D-glyceraldehyde 3-phosphate contacts are provided by residues 149–151 (SCT), threonine 180, 209–210 (TG), and arginine 232. Cysteine 150 functions as the Nucleophile in the catalytic mechanism. Asparagine 314 contributes to the NAD(+) binding site.

Belongs to the glyceraldehyde-3-phosphate dehydrogenase family. As to quaternary structure, homotetramer.

The catalysed reaction is D-glyceraldehyde 3-phosphate + phosphate + NAD(+) = (2R)-3-phospho-glyceroyl phosphate + NADH + H(+). The protein operates within carbohydrate degradation; glycolysis; pyruvate from D-glyceraldehyde 3-phosphate: step 1/5. Its function is as follows. Glyceraldehyde-3-phosphate dehydrogenase; part of the gene cluster that mediates the biosynthesis of heptelidic acid (HA), a sesquiterpene lactone that acts as an inhibitor of glyceraldehyde-3-phosphatedehydrogenase (GAPDH) and a growth inhibitor of the salt-tolerant lactic acid bacteria in soy sauce brewing. The GAPDPH hepG/gdpB shows much higher resistance to HA than the GAPDH gpdA located outside of the cluster, but it does not seem to act in self-resistance. The polypeptide is Glyceraldehyde-3-phosphate dehydrogenase B (Aspergillus oryzae (strain ATCC 42149 / RIB 40) (Yellow koji mold)).